The chain runs to 514 residues: MTEPLCLTPGGLSLDVLRRIHREAPPLTLDPRSYAAMAASQAVVAAIAGGESAVYGINTGFGKLAHKRIAPADLEALQTNLILSHATGMGAPIADATVRLILAIKAASLAVGASGIRAEIVDALLALANADVLPVIPSKGSVGASGDLAPLAHLCCALLGIGSVRHKGAVLPAGEGLAIAGLSPITLRAKEGLALINGTQVSTALALAGLFEIERAFAAAILAGALSVEAVMGSHRPFDPRISALRGQFGQIDVAALFRLLLDGSPLNAAHQGPSCERVQDPYSLRCQPQVMGAVLDQMRFAARTLTIEANGVTDNPLVLVDTGEVLSGGNFHAEPVAMAADQLAIAASEIGALSERRIAMLIDSTISGLPPFLVAEPGLNSGFMIAHVTAAALASENKSLAHPASVDSLPTSANQEDHVSMATFAARRLGDIAANVTGIVGIELLAAAQGLEFHRPLRSSQTLETAMAMIRERVPSYRVDRYFAPDLEAIAHLIGEGRFDALVPVDLSTLGSV.

Positions 144-146 (ASG) form a cross-link, 5-imidazolinone (Ala-Gly). At S145 the chain carries 2,3-didehydroalanine (Ser).

Belongs to the PAL/histidase family. Contains an active site 4-methylidene-imidazol-5-one (MIO), which is formed autocatalytically by cyclization and dehydration of residues Ala-Ser-Gly.

It is found in the cytoplasm. The enzyme catalyses L-histidine = trans-urocanate + NH4(+). It participates in amino-acid degradation; L-histidine degradation into L-glutamate; N-formimidoyl-L-glutamate from L-histidine: step 1/3. The chain is Histidine ammonia-lyase from Rhodospirillum rubrum (strain ATCC 11170 / ATH 1.1.1 / DSM 467 / LMG 4362 / NCIMB 8255 / S1).